Here is a 276-residue protein sequence, read N- to C-terminus: Sulfur carrier protein FdhD (276 aa).

The active-site Cysteine persulfide intermediate is the Cys-118.

The protein belongs to the FdhD family.

It is found in the cytoplasm. In terms of biological role, required for formate dehydrogenase (FDH) activity. Acts as a sulfur carrier protein that transfers sulfur from IscS to the molybdenum cofactor prior to its insertion into FDH. In Mycobacterium bovis (strain ATCC BAA-935 / AF2122/97), this protein is Sulfur carrier protein FdhD.